We begin with the raw amino-acid sequence, 196 residues long: DnaA initiator-associating protein DiaA (196 aa).

One can recognise an SIS domain in the interval 34-196 (LVQSLLNGNK…DNTLFPHQDV (163 aa)).

It belongs to the SIS family. DiaA subfamily. Homotetramer; dimer of dimers.

Its function is as follows. Required for the timely initiation of chromosomal replication via direct interactions with the DnaA initiator protein. The chain is DnaA initiator-associating protein DiaA from Escherichia coli O6:K15:H31 (strain 536 / UPEC).